We begin with the raw amino-acid sequence, 361 residues long: Isocitrate dehydrogenase [NAD] subunit 1, mitochondrial (361 aa).

The transit peptide at 1–12 (MLRQGIAAQKKS) directs the protein to the mitochondrion. The substrate site is built by arginine 110, arginine 141, and aspartate 229. Aspartate 229 provides a ligand contact to Mg(2+).

This sequence belongs to the isocitrate and isopropylmalate dehydrogenases family. In terms of assembly, octamer of two non-identical subunits IDH1 and IDH2. Mg(2+) is required as a cofactor. Mn(2+) serves as cofactor.

The protein resides in the mitochondrion. It carries out the reaction D-threo-isocitrate + NAD(+) = 2-oxoglutarate + CO2 + NADH. Functionally, performs an essential role in the oxidative function of the citric acid cycle. The sequence is that of Isocitrate dehydrogenase [NAD] subunit 1, mitochondrial (IDH1) from Kluyveromyces lactis (strain ATCC 8585 / CBS 2359 / DSM 70799 / NBRC 1267 / NRRL Y-1140 / WM37) (Yeast).